A 520-amino-acid chain; its full sequence is Alkyl hydroperoxide reductase subunit F (520 aa).

Asp213–Ile228 lines the FAD pocket. A disulfide bridge connects residues Cys343 and Cys346. Arg355 to Ala369 is an NAD(+) binding site. Thr476 to Asp486 provides a ligand contact to FAD.

It belongs to the class-II pyridine nucleotide-disulfide oxidoreductase family. As to quaternary structure, homodimer. Requires FAD as cofactor.

Functionally, serves to protect the cell against DNA damage by alkyl hydroperoxides. It can use either NADH or NADPH as electron donor for direct reduction of redox dyes or of alkyl hydroperoxides when combined with the AhpC protein. This Pseudomonas putida (Arthrobacter siderocapsulatus) protein is Alkyl hydroperoxide reductase subunit F (ahpF).